We begin with the raw amino-acid sequence, 922 residues long: Eukaryotic translation initiation factor 3 subunit C (922 aa).

Disordered stretches follow at residues 1–37 and 154–308; these read MSRF…QPII and APIA…KVKG. Positions 8–21 are enriched in low complexity; the sequence is GSDSESESSLSGDE. Positions 165–189 are enriched in acidic residues; it reads ESADEDQEKDEDSEASSSSDDDSDE. Over residues 207–216 the composition is skewed to basic and acidic residues; it reads SRSKFLKKEE. Positions 217–243 are enriched in acidic residues; sequence AEDEESSSDDEDWGSDSDESDSDESDD. The segment covering 258–275 has biased composition (basic and acidic residues); the sequence is TVNEGDRQAAEKKKEEKA. Residues 289–301 are compositionally biased toward acidic residues; the sequence is EGEEEEDDNEGGG. In terms of domain architecture, PCI spans 674 to 850; sequence FHMHINLELL…QTVVMHGTEP (177 aa). Positions 885-922 are disordered; the sequence is YFNRGDRGDRDQKDQYQRKEGGYMRRGYRRDQQGQSNY. Over residues 888-907 the composition is skewed to basic and acidic residues; the sequence is RGDRGDRDQKDQYQRKEGGY.

The protein belongs to the eIF-3 subunit C family. As to quaternary structure, component of the eukaryotic translation initiation factor 3 (eIF-3) complex, which is composed of 13 subunits: eif3a, eif3b, eif3c, eif3d, eif3e, eif3f, eif3g, eif3h, eif3i, eif3j, eif3k, eif3l and eif3m.

Its subcellular location is the cytoplasm. In terms of biological role, component of the eukaryotic translation initiation factor 3 (eIF-3) complex, which is involved in protein synthesis of a specialized repertoire of mRNAs and, together with other initiation factors, stimulates binding of mRNA and methionyl-tRNAi to the 40S ribosome. The eIF-3 complex specifically targets and initiates translation of a subset of mRNAs involved in cell proliferation. The chain is Eukaryotic translation initiation factor 3 subunit C (eif3c) from Xenopus tropicalis (Western clawed frog).